Reading from the N-terminus, the 271-residue chain is NH(3)-dependent NAD(+) synthetase (271 aa).

43–50 provides a ligand contact to ATP; the sequence is GISGGQDS. Position 49 (Asp-49) interacts with Mg(2+). Arg-137 contributes to the deamido-NAD(+) binding site. Thr-157 is an ATP binding site. Residue Glu-162 coordinates Mg(2+). Deamido-NAD(+) contacts are provided by Lys-170 and Asp-177. 2 residues coordinate ATP: Lys-186 and Thr-208. A deamido-NAD(+)-binding site is contributed by 257–258; the sequence is HK.

This sequence belongs to the NAD synthetase family. As to quaternary structure, homodimer.

It carries out the reaction deamido-NAD(+) + NH4(+) + ATP = AMP + diphosphate + NAD(+) + H(+). It participates in cofactor biosynthesis; NAD(+) biosynthesis; NAD(+) from deamido-NAD(+) (ammonia route): step 1/1. Functionally, catalyzes the ATP-dependent amidation of deamido-NAD to form NAD. Uses ammonia as a nitrogen source. The protein is NH(3)-dependent NAD(+) synthetase of Exiguobacterium sp. (strain ATCC BAA-1283 / AT1b).